We begin with the raw amino-acid sequence, 172 residues long: Ribosome maturation factor RimM (172 aa).

Residues 100 to 172 enclose the PRC barrel domain; it reads PGEYYRVDLV…RIVVDWDPGF (73 aa).

The protein belongs to the RimM family. In terms of assembly, binds ribosomal protein uS19.

It localises to the cytoplasm. Its function is as follows. An accessory protein needed during the final step in the assembly of 30S ribosomal subunit, possibly for assembly of the head region. Essential for efficient processing of 16S rRNA. May be needed both before and after RbfA during the maturation of 16S rRNA. It has affinity for free ribosomal 30S subunits but not for 70S ribosomes. The protein is Ribosome maturation factor RimM of Methylococcus capsulatus (strain ATCC 33009 / NCIMB 11132 / Bath).